A 725-amino-acid chain; its full sequence is Ribosomal RNA large subunit methyltransferase K/L (725 aa).

A THUMP domain is found at 46 to 157 (VAYRLCLWSR…RGQATLSLDL (112 aa)).

The protein belongs to the methyltransferase superfamily. RlmKL family.

It localises to the cytoplasm. It carries out the reaction guanosine(2445) in 23S rRNA + S-adenosyl-L-methionine = N(2)-methylguanosine(2445) in 23S rRNA + S-adenosyl-L-homocysteine + H(+). It catalyses the reaction guanosine(2069) in 23S rRNA + S-adenosyl-L-methionine = N(2)-methylguanosine(2069) in 23S rRNA + S-adenosyl-L-homocysteine + H(+). Functionally, specifically methylates the guanine in position 2445 (m2G2445) and the guanine in position 2069 (m7G2069) of 23S rRNA. The sequence is that of Ribosomal RNA large subunit methyltransferase K/L from Pseudomonas aeruginosa (strain ATCC 15692 / DSM 22644 / CIP 104116 / JCM 14847 / LMG 12228 / 1C / PRS 101 / PAO1).